A 125-amino-acid chain; its full sequence is Small ribosomal subunit protein uS12 (125 aa).

A 3-methylthioaspartic acid modification is found at D89. Positions 106–125 are disordered; that stretch reads GVKDRKQSRSKYGAKRPKKA. The span at 113-125 shows a compositional bias: basic residues; the sequence is SRSKYGAKRPKKA.

It belongs to the universal ribosomal protein uS12 family. As to quaternary structure, part of the 30S ribosomal subunit. Contacts proteins S8 and S17. May interact with IF1 in the 30S initiation complex.

Its function is as follows. With S4 and S5 plays an important role in translational accuracy. In terms of biological role, interacts with and stabilizes bases of the 16S rRNA that are involved in tRNA selection in the A site and with the mRNA backbone. Located at the interface of the 30S and 50S subunits, it traverses the body of the 30S subunit contacting proteins on the other side and probably holding the rRNA structure together. The combined cluster of proteins S8, S12 and S17 appears to hold together the shoulder and platform of the 30S subunit. The chain is Small ribosomal subunit protein uS12 from Azoarcus sp. (strain BH72).